A 341-amino-acid chain; its full sequence is Retinol dehydrogenase 10-A (341 aa).

The helical; Signal-anchor transmembrane segment at Ile3–Gly23 threads the bilayer. Leu40–Val64 serves as a coordination point for NADP(+). Residue Ser197 coordinates substrate. The active-site Proton acceptor is Tyr210.

It belongs to the short-chain dehydrogenases/reductases (SDR) family.

Its subcellular location is the microsome membrane. The protein resides in the endoplasmic reticulum membrane. The catalysed reaction is all-trans-retinol + NADP(+) = all-trans-retinal + NADPH + H(+). The protein operates within cofactor metabolism; retinol metabolism. In terms of biological role, retinol dehydrogenase with a clear preference for NADP. Converts all-trans-retinol to all-trans-retinal. Has no detectable activity towards 11-cis-retinol, 9-cis-retinol and 13-cis-retinol. This Xenopus laevis (African clawed frog) protein is Retinol dehydrogenase 10-A (rdh10-a).